The following is a 223-amino-acid chain: Deoxyribose-phosphate aldolase (223 aa).

Aspartate 91 functions as the Proton donor/acceptor in the catalytic mechanism. The active-site Schiff-base intermediate with acetaldehyde is lysine 153. The active-site Proton donor/acceptor is the lysine 182.

Belongs to the DeoC/FbaB aldolase family. DeoC type 1 subfamily.

It localises to the cytoplasm. It catalyses the reaction 2-deoxy-D-ribose 5-phosphate = D-glyceraldehyde 3-phosphate + acetaldehyde. It functions in the pathway carbohydrate degradation; 2-deoxy-D-ribose 1-phosphate degradation; D-glyceraldehyde 3-phosphate and acetaldehyde from 2-deoxy-alpha-D-ribose 1-phosphate: step 2/2. Functionally, catalyzes a reversible aldol reaction between acetaldehyde and D-glyceraldehyde 3-phosphate to generate 2-deoxy-D-ribose 5-phosphate. The polypeptide is Deoxyribose-phosphate aldolase (Streptococcus agalactiae serotype V (strain ATCC BAA-611 / 2603 V/R)).